The primary structure comprises 437 residues: AA9 family lytic polysaccharide monooxygenase H (437 aa).

Residues 1-21 (MNLSLFTLALVACYSSQLAAA) form the signal peptide. His-22 contacts Cu(2+). Cysteines 64 and 193 form a disulfide. 2 N-linked (GlcNAc...) asparagine glycosylation sites follow: Asn-67 and Asn-79. His-104 contributes to the Cu(2+) binding site. 2 N-linked (GlcNAc...) asparagine glycosylation sites follow: Asn-120 and Asn-138. The O2 site is built by His-178 and Gln-188. Residue Tyr-190 coordinates Cu(2+). N-linked (GlcNAc...) asparagine glycans are attached at residues Asn-252 and Asn-307. A Chitin-binding type-1 domain is found at 392 to 437 (DGKCGDGNGQTCKGSLLGECCSQVGYCGSSESYCGVGCQGNFGVCG). Cystine bridges form between Cys-395–Cys-412, Cys-403–Cys-418, Cys-411–Cys-425, and Cys-429–Cys-436.

The protein belongs to the polysaccharide monooxygenase AA9 family. Requires Cu(2+) as cofactor.

Its subcellular location is the secreted. It catalyses the reaction [(1-&gt;4)-beta-D-glucosyl]n+m + reduced acceptor + O2 = 4-dehydro-beta-D-glucosyl-[(1-&gt;4)-beta-D-glucosyl]n-1 + [(1-&gt;4)-beta-D-glucosyl]m + acceptor + H2O.. Lytic polysaccharide monooxygenase (LPMO) that depolymerizes crystalline and amorphous polysaccharides via the oxidation of scissile alpha- or beta-(1-4)-glycosidic bonds, yielding C1 and C4 oxidation products. Catalysis by LPMOs requires the reduction of the active-site copper from Cu(II) to Cu(I) by a reducing agent and H(2)O(2) or O(2) as a cosubstrate. This chain is AA9 family lytic polysaccharide monooxygenase H, found in Botryotinia fuckeliana (strain B05.10) (Noble rot fungus).